The following is a 332-amino-acid chain: Tetraacyldisaccharide 4'-kinase (332 aa).

60–67 lines the ATP pocket; sequence TVGGTGKT.

The protein belongs to the LpxK family.

The enzyme catalyses a lipid A disaccharide + ATP = a lipid IVA + ADP + H(+). It participates in glycolipid biosynthesis; lipid IV(A) biosynthesis; lipid IV(A) from (3R)-3-hydroxytetradecanoyl-[acyl-carrier-protein] and UDP-N-acetyl-alpha-D-glucosamine: step 6/6. Its function is as follows. Transfers the gamma-phosphate of ATP to the 4'-position of a tetraacyldisaccharide 1-phosphate intermediate (termed DS-1-P) to form tetraacyldisaccharide 1,4'-bis-phosphate (lipid IVA). The sequence is that of Tetraacyldisaccharide 4'-kinase from Pseudomonas aeruginosa (strain LESB58).